Here is a 147-residue protein sequence, read N- to C-terminus: Hemoglobin subunit beta-M (147 aa).

An N-acetylvaline modification is found at Val2. Residues 3 to 147 (HLTSEEKNCI…VAHALAHKYH (145 aa)) enclose the Globin domain. Thr13 carries the phosphothreonine modification. Ser45 bears the Phosphoserine mark. Lys60 carries the post-translational modification N6-acetyllysine. His64 contributes to the heme b binding site. Lys83 is modified (N6-acetyllysine). His93 contributes to the heme b binding site. The residue at position 94 (Cys94) is an S-nitrosocysteine. At Lys145 the chain carries N6-acetyllysine.

This sequence belongs to the globin family. In terms of assembly, heterotetramer of two alpha chains and two beta chains. Red blood cells.

Its function is as follows. Involved in oxygen transport from the lung to the various peripheral tissues. The sequence is that of Hemoglobin subunit beta-M (HBB) from Didelphis virginiana (North American opossum).